Here is a 251-residue protein sequence, read N- to C-terminus: UPF0309 protein SGR_3073 (251 aa).

Residues Val-36–Pro-221 enclose the SIS domain.

The protein belongs to the UPF0309 family.

The protein is UPF0309 protein SGR_3073 of Streptomyces griseus subsp. griseus (strain JCM 4626 / CBS 651.72 / NBRC 13350 / KCC S-0626 / ISP 5235).